The primary structure comprises 888 residues: MNSREIRQSFLDFFDRKGHTIVRSAPVIPLDDPTLLFTNAGMNQFKDVFLDKGTRPYVRAADTQKCIRASGKHNDLEDVGRDTYHHTFFEMLGNWSFGDYYKKEAISWAWELLTSVWHLPKERLYATVYYDDEESYLLWQEETDIPHDHIIKFDEKDNFWEMGETGPCGPCSEIHIDLTEDGSGKPLVNAGDYRVIELWNLVFIQYNRQADGRLEPLPQKHVDTGMGFERVCAVMQGKASNYDTDVFRPLFDRITEITGVSYNASLDDPSDIAMRVLADHARTLTFALTDGAMPSNEGRGYVLRRILRRALRYSKTLGCSEPLLYRLVETLAASMGDVFPELRKQQQAVSRIIRAEEESFLATLDRGIEIFNELIAAVRSRGTTVVSGDDAFRLYDTFGFPLDLTRLMAAEAGFEVDEEGFDRCMKEQKTRARQDRRDKQHLKGDEGEWTWFSAERTSVFTGYHSLEELASITGVSIFSDRLLVVLDRTPFYAESGGQCGDRGWIETAAYRLRVSDTRKDGDMIVHLVTEVRDSVSDGAISPADLSFDEGKLACRASVDRSDRQGTERNHTATHLLHAALRRTLGQHVQQKGSFVSSERLRFDFSHFARLTSEELAIVESEVNEQIRSAEPVVKHQDIPYDEAIARGALAFFGDKYADRVRVVEIAGLSVELCGGTHVDSIGQIGLFKIVSESSVASGVRRIEALTGKAAEVLLWKEYRELQDIRQMLKLKADEEVIGRIAELADSKKELEKQLQVYRTEALSGILQRSLDAAESVGSIRFMTLRLEHVDQDSLRQAVLALREKDPASTGLLCTEEDGKVSLTAFAGERAVGEFGLDAGKLVREAAAFVRGGGGGKPEFATAGGKDPEGIQKAFDSFAASVREKVSAK.

Zn(2+)-binding residues include histidine 570, histidine 574, cysteine 673, and histidine 677.

This sequence belongs to the class-II aminoacyl-tRNA synthetase family. The cofactor is Zn(2+).

The protein resides in the cytoplasm. The catalysed reaction is tRNA(Ala) + L-alanine + ATP = L-alanyl-tRNA(Ala) + AMP + diphosphate. In terms of biological role, catalyzes the attachment of alanine to tRNA(Ala) in a two-step reaction: alanine is first activated by ATP to form Ala-AMP and then transferred to the acceptor end of tRNA(Ala). Also edits incorrectly charged Ser-tRNA(Ala) and Gly-tRNA(Ala) via its editing domain. The polypeptide is Alanine--tRNA ligase (Chlorobium phaeobacteroides (strain DSM 266 / SMG 266 / 2430)).